The chain runs to 370 residues: Adaptive-response sensory kinase SasA (370 aa).

The 214-residue stretch at 152–365 (MVAHELRTPL…CFYLTVPVWQ (214 aa)) folds into the Histidine kinase domain. His-155 is subject to Phosphohistidine; by autocatalysis.

Homooligomerizes. Interacts with KaiC. Participates in the KaiBC complex, whose core is composed of a KaiC homohexamer and 6 KaiB.

It carries out the reaction ATP + protein L-histidine = ADP + protein N-phospho-L-histidine.. In terms of biological role, member of the two-component regulatory system SasA/RpaA involved in genome-wide circadian gene expression. One of several clock output pathways. Participates in the Kai clock protein complex, the main circadian regulator in cyanobacteria, via its interaction with KaiC. KaiC enhances the autophosphorylation activity of SasA, which then transfers its phosphate group to RpaA to activate it. In addition to its output function, recruits fold-shifted KaiB (KaiB(fs)) to KaiC to cooperatively form the KaiB(6):KaiC(6) complex (independent of SasA kinase activity). Required for robustness of the circadian rhythm of gene expression and is involved in clock output, also required for adaptation to light/dark cycles. This chain is Adaptive-response sensory kinase SasA, found in Prochlorococcus marinus (strain MIT 9303).